We begin with the raw amino-acid sequence, 266 residues long: 22 kDa alpha-zein 8 (266 aa).

The N-terminal stretch at 1–21 is a signal peptide; it reads MATKILALLALLALFVSATNA.

Belongs to the zein family.

Zeins are major seed storage proteins. This chain is 22 kDa alpha-zein 8, found in Zea mays (Maize).